A 517-amino-acid polypeptide reads, in one-letter code: Protein ERGIC-53 (517 aa).

Positions 1 to 30 are cleaved as a signal peptide; sequence MAVSRRRVPQAGARSFFCALLLSFSQFTGS. The Lumenal segment spans residues 31 to 484; that stretch reads DGTGGDAAAP…DLPPFPSCLS (454 aa). Residues 52–275 form the L-type lectin-like domain; sequence RRFEYKYSFK…DVLSFLTFQL (224 aa). The a carbohydrate site is built by Ser96 and Asp129. Ca(2+) is bound by residues Asp160, Phe162, and Asn164. Residues Asn164 and His186 each coordinate a carbohydrate. Asp189 serves as a coordination point for Ca(2+). Cysteines 198 and 238 form a disulfide. 259-261 serves as a coordination point for a carbohydrate; that stretch reads GGL. The residue at position 433 (Ser433) is a Phosphoserine. A helical membrane pass occupies residues 485–505; the sequence is TIHFVIFVVVQTVLFVGYIMY. The Cytoplasmic segment spans residues 506–517; sequence RTQQEAAAKKFF. The segment at 506-517 is mediates interaction with RAB3GAP1, RAB3GAP2 and UBXN6; it reads RTQQEAAAKKFF. The ER export motif motif lies at 516–517; that stretch reads FF.

In terms of assembly, exists both as a covalent disulfide-linked homohexamer, and a complex of three disulfide-linked dimers non-covalently kept together. Interacts with MCFD2. May interact with TMEM115. Interacts with RAB3GAP1 and RAB3GAP2. Interacts with UBXN6. Interacts with SERPINA1/alpha1-antitrypsin. Interacts with BET1.

It is found in the endoplasmic reticulum-Golgi intermediate compartment membrane. The protein resides in the golgi apparatus membrane. The protein localises to the endoplasmic reticulum membrane. Mannose-specific lectin. May recognize sugar residues of glycoproteins, glycolipids, or glycosylphosphatidyl inositol anchors and may be involved in the sorting or recycling of proteins, lipids, or both. The LMAN1-MCFD2 complex forms a specific cargo receptor for the ER-to-Golgi transport of selected proteins. The protein is Protein ERGIC-53 (Lman1) of Mus musculus (Mouse).